The sequence spans 239 residues: uncharacterized protein (239 aa).

This is an uncharacterized protein from Escherichia coli O157:H7.